The sequence spans 62 residues: Kurtoxin-like I (62 aa).

The region spanning 2-62 is the LCN-type CS-alpha/beta domain; the sequence is IDGYPVDNWN…ARIKRGGRCN (61 aa). 4 disulfides stabilise this stretch: Cys12-Cys61, Cys16-Cys37, Cys23-Cys44, and Cys27-Cys46.

As to expression, expressed by the venom gland.

Its subcellular location is the secreted. Functionally, this neurotoxin acts on sodium and calcium channels. Potently inhibits native voltage-gated T-type calcium channel activity in mouse male germ cells and weakly blocks Cav3.3/CACNA1I channels expressed in Xenopus oocytes. In addition, significantly slows the inactivation of activated recombinant sodium channels (Nav1.5/SCN5A). The polypeptide is Kurtoxin-like I (Parabuthus granulatus (Granulated thick-tailed scorpion)).